Consider the following 342-residue polypeptide: Ribosomal RNA small subunit methyltransferase C (342 aa).

It belongs to the methyltransferase superfamily. RsmC family. As to quaternary structure, monomer.

The protein resides in the cytoplasm. It catalyses the reaction guanosine(1207) in 16S rRNA + S-adenosyl-L-methionine = N(2)-methylguanosine(1207) in 16S rRNA + S-adenosyl-L-homocysteine + H(+). In terms of biological role, specifically methylates the guanine in position 1207 of 16S rRNA in the 30S particle. This is Ribosomal RNA small subunit methyltransferase C from Enterobacter sp. (strain 638).